A 154-amino-acid chain; its full sequence is uncharacterized protein (154 aa).

This is an uncharacterized protein from Sulfolobus islandicus rod-shaped virus 1 (SIRV-1).